The following is a 108-amino-acid chain: Flagellar hook-basal body complex protein FliE (108 aa).

It belongs to the FliE family.

It localises to the bacterial flagellum basal body. The sequence is that of Flagellar hook-basal body complex protein FliE from Pseudomonas fluorescens (strain ATCC BAA-477 / NRRL B-23932 / Pf-5).